The chain runs to 245 residues: Ribosomal RNA large subunit methyltransferase E (245 aa).

The tract at residues 1 to 25 (MTKSPIGGNRSGRKLGQKVKKGKLK) is disordered. Over residues 11–25 (SGRKLGQKVKKGKLK) the composition is skewed to basic residues. S-adenosyl-L-methionine contacts are provided by glycine 81, tryptophan 83, aspartate 104, aspartate 120, and aspartate 144. Lysine 184 functions as the Proton acceptor in the catalytic mechanism.

The protein belongs to the class I-like SAM-binding methyltransferase superfamily. RNA methyltransferase RlmE family.

It is found in the cytoplasm. The catalysed reaction is uridine(2552) in 23S rRNA + S-adenosyl-L-methionine = 2'-O-methyluridine(2552) in 23S rRNA + S-adenosyl-L-homocysteine + H(+). Functionally, specifically methylates the uridine in position 2552 of 23S rRNA at the 2'-O position of the ribose in the fully assembled 50S ribosomal subunit. The chain is Ribosomal RNA large subunit methyltransferase E from Sinorhizobium fredii (strain NBRC 101917 / NGR234).